Consider the following 445-residue polypeptide: Ribosomal protein uS12 methylthiotransferase RimO (445 aa).

Residues 6 to 121 form the MTTase N-terminal domain; sequence KKVAVVTLGC…ILETLEEAEK (116 aa). C15, C50, C84, C159, C163, and C166 together coordinate [4Fe-4S] cluster. Positions 145-375 constitute a Radical SAM core domain; that stretch reads LSPKQYAYVK…MELQHDIAYE (231 aa). The region spanning 378 to 445 is the TRAM domain; it reads QRWVGQTLKV…SYDLMGEVVQ (68 aa).

This sequence belongs to the methylthiotransferase family. RimO subfamily. [4Fe-4S] cluster serves as cofactor.

It localises to the cytoplasm. It catalyses the reaction L-aspartate(89)-[ribosomal protein uS12]-hydrogen + (sulfur carrier)-SH + AH2 + 2 S-adenosyl-L-methionine = 3-methylsulfanyl-L-aspartate(89)-[ribosomal protein uS12]-hydrogen + (sulfur carrier)-H + 5'-deoxyadenosine + L-methionine + A + S-adenosyl-L-homocysteine + 2 H(+). Catalyzes the methylthiolation of an aspartic acid residue of ribosomal protein uS12. The chain is Ribosomal protein uS12 methylthiotransferase RimO from Desulfitobacterium hafniense (strain Y51).